The primary structure comprises 249 residues: Vesicle-associated membrane protein-associated protein A (249 aa).

Alanine 2 is subject to N-acetylalanine. At alanine 2–proline 227 the chain is on the cytoplasmic side. In terms of domain architecture, MSP spans isoleucine 14–glutamate 131. Residues lysine 50–threonine 53 are phosphorylated FFAT motif binding. Lysine 125 bears the N6-acetyllysine mark. Residues glutamate 135–proline 144 show a composition bias toward basic and acidic residues. Positions glutamate 135 to leucine 167 are disordered. Serine 166 is modified (phosphoserine). Residues aspartate 169–lysine 205 are a coiled coil. Threonine 170 is subject to Phosphothreonine. A phosphoserine mark is found at serine 214, serine 216, and serine 219. The chain crosses the membrane as a helical; Anchor for type IV membrane protein span at residues leucine 228 to isoleucine 248.

This sequence belongs to the VAMP-associated protein (VAP) (TC 9.B.17) family. In terms of assembly, homodimer; disulfide-linked. Heterodimer with VAPB. Interacts with VAMP1, VAMP2, STX1A, BET1, SEC22C and with the C-terminal domain of OCLN. Interacts (via MSP domain) with OSBPL1A (via FFAT motif). Interacts (via MSP domain) with ZFYVE27; may retain ZFYVE27 in the endoplasmic reticulum and regulate its function in cell projections formation. Interacts with OSBP. Interacts (via C-terminus) with RSAD2/viperin (via C-terminus). Interacts with IFITM3. Interacts with OSBPL3 (phosphorylated form). Interacts with KIF5A in a ZFYVE27-dependent manner. Interacts (via MSP domain) with STARD3 (via phosphorylated FFAT motif); this interaction recruits VAPA to the endosome. Interacts with STARD3NL (via FFAT motif). Interacts with CERT1. Interacts with PLEKHA3 and SACM1L to form a ternary complex. Interacts with VPS13A (via FFAT motif). Interacts with RB1CC1 (via phosphorylated FFAT motif), MIGA2 (via phosphorylated FFAT motif), RMDN3 (via phosphorylated FFAT motif), KCNB1 (via phosphorylated FFAT motif) and KCNB2 (via phosphorylated FFAT motif). Interacts (via MSP domain) with WDR44 (via FFAT-like motif); the interactions connect the endoplasmic reticulum (ER) with the endosomal tubule. As to quaternary structure, (Microbial infection) Interacts with HCV protein NS5A and NS5B. In terms of tissue distribution, ubiquitous.

Its subcellular location is the endoplasmic reticulum membrane. The protein resides in the cell membrane. It is found in the cell junction. The protein localises to the tight junction. It localises to the nucleus membrane. In terms of biological role, endoplasmic reticulum (ER)-anchored protein that mediates the formation of contact sites between the ER and endosomes via interaction with FFAT motif-containing proteins such as STARD3 or WDR44. STARD3-VAPA interaction enables cholesterol transfer from the ER to endosomes. Via interaction with WDR44 participates in neosynthesized protein export. In addition, recruited to the plasma membrane through OSBPL3 binding. The OSBPL3-VAPA complex stimulates RRAS signaling which in turn attenuates integrin beta-1 (ITGB1) activation at the cell surface. With OSBPL3, may regulate ER morphology. May play a role in vesicle trafficking. This is Vesicle-associated membrane protein-associated protein A from Homo sapiens (Human).